A 95-amino-acid polypeptide reads, in one-letter code: Parvalbumin beta 3 (95 aa).

Residue Ala-1 is modified to N-acetylalanine. EF-hand domains lie at 39-66 (FFAIIDQDHSGFIEEDELKLFLQTFSAG) and 77-95 (DVDGDGMIGVDEFVALVKA). 11 residues coordinate Ca(2+): Asp-44, Asp-46, Ser-48, Phe-50, Glu-52, Glu-55, Asp-77, Asp-79, Asp-81, Met-83, and Glu-88.

Belongs to the parvalbumin family.

Functionally, in muscle, parvalbumin is thought to be involved in relaxation after contraction. It binds two calcium ions. This Merluccius paradoxus (Deep-water Cape hake) protein is Parvalbumin beta 3.